The primary structure comprises 186 residues: RNA polymerase sigma factor NccH (186 aa).

Residues 49–62 carry the Polymerase core binding motif; it reads DIVQDTFIAAWHAL. The segment at residues 152 to 171 is a DNA-binding region (H-T-H motif); sequence HPEAAMALGTSAKAVESRVA.

It belongs to the sigma-70 factor family. ECF subfamily.

Functionally, sigma factors are initiation factors that promote the attachment of RNA polymerase to specific initiation sites and are then released. This sigma factor regulates the genes for a membrane-located efflux system that confers resistance to nickel, cobalt and cadmium. This Alcaligenes xylosoxydans xylosoxydans (Achromobacter xylosoxidans) protein is RNA polymerase sigma factor NccH (nccH).